The sequence spans 482 residues: Matrix metalloproteinase-20 (482 aa).

Positions 1-21 are cleaved as a signal peptide; that stretch reads MKVLPASGLAVLVTALKFATA. Positions 22–106 are excised as a propeptide; it reads DPNLLAATPR…PRCGVPDVAN (85 aa). The short motif at 97-104 is the Cysteine switch element; sequence PRCGVPDV. Cysteine 99 contacts Zn(2+). Ca(2+) contacts are provided by glutamate 163, alanine 164, and aspartate 165. Histidine 175 and aspartate 177 together coordinate Zn(2+). The Ca(2+) site is built by aspartate 182, glycine 183, arginine 185, and threonine 187. Residue histidine 190 coordinates Zn(2+). Positions 196, 197, 199, and 201 each coordinate Ca(2+). Histidine 203 contributes to the Zn(2+) binding site. Aspartate 205 and glutamate 208 together coordinate Ca(2+). Histidine 225 contributes to the Zn(2+) binding site. The active site involves glutamate 226. Positions 229 and 235 each coordinate Zn(2+). Hemopexin repeat units follow at residues 292 to 342, 343 to 388, 390 to 438, and 439 to 482; these read PDLC…FPQL, MSNV…GFPR, VQRI…FSGV, and SGHI…WIGC. Cysteine 295 and cysteine 482 are joined by a disulfide.

Belongs to the peptidase M10A family. The cofactor is Zn(2+). Ca(2+) is required as a cofactor. Autoactivates at least at the 106-Asn-|-Tyr-107 site. Expressed in the enamel organ.

Its subcellular location is the secreted. The protein resides in the extracellular space. It localises to the extracellular matrix. Degrades amelogenin, the major protein component of the enamel matrix and two of the macromolecules characterizing the cartilage extracellular matrix: aggrecan and the cartilage oligomeric matrix protein (COMP). May play a central role in tooth enamel formation. Cleaves aggrecan at the '360-Asn-|-Phe-361' site. The sequence is that of Matrix metalloproteinase-20 (Mmp20) from Mus musculus (Mouse).